The chain runs to 453 residues: Ribosomal protein uS12 methylthiotransferase RimO (453 aa).

One can recognise an MTTase N-terminal domain in the interval 9-124 (PKIGFVSLGC…VMDAVHKHMP (116 aa)). Positions 18, 54, 83, 155, 159, and 162 each coordinate [4Fe-4S] cluster. The region spanning 141–382 (LTPKHFAYLK…MLLQEEISKK (242 aa)) is the Radical SAM core domain. Residues 385–453 (QAKVGKTMRV…ADAHDLWAEA (69 aa)) form the TRAM domain.

The protein belongs to the methylthiotransferase family. RimO subfamily. The cofactor is [4Fe-4S] cluster.

The protein localises to the cytoplasm. It carries out the reaction L-aspartate(89)-[ribosomal protein uS12]-hydrogen + (sulfur carrier)-SH + AH2 + 2 S-adenosyl-L-methionine = 3-methylsulfanyl-L-aspartate(89)-[ribosomal protein uS12]-hydrogen + (sulfur carrier)-H + 5'-deoxyadenosine + L-methionine + A + S-adenosyl-L-homocysteine + 2 H(+). Catalyzes the methylthiolation of an aspartic acid residue of ribosomal protein uS12. The sequence is that of Ribosomal protein uS12 methylthiotransferase RimO from Janthinobacterium sp. (strain Marseille) (Minibacterium massiliensis).